The chain runs to 265 residues: MKSLFYFFERINFLTADFLLKKIRIGADNLKDVSSLDLFFVHMHHRGVAVHNIFLFLLTYVPFFKRAVLGCYLKKKLFIDHDLKNKNYFKMKRANALFFKGDFLTSNNFLRASTTFYNSFFFFLIRNHVITKTTLNAIYFSKGSFKPAETSYYFNAYVLHFFKKNKVNDFIVFLNENKIKDYWAYLTTIYASPEAQNLKLIDPVGSLIEQSNSYADRLPTRRTLRKPAPTQSSMSRLCILLFSLTTPPLKKLRPPLSLRLHSCYP.

The protein localises to the mitochondrion. This is an uncharacterized protein from Paramecium tetraurelia.